We begin with the raw amino-acid sequence, 268 residues long: Tryptophan synthase alpha chain (268 aa).

Active-site proton acceptor residues include Glu49 and Asp60.

The protein belongs to the TrpA family. As to quaternary structure, tetramer of two alpha and two beta chains.

It carries out the reaction (1S,2R)-1-C-(indol-3-yl)glycerol 3-phosphate + L-serine = D-glyceraldehyde 3-phosphate + L-tryptophan + H2O. The protein operates within amino-acid biosynthesis; L-tryptophan biosynthesis; L-tryptophan from chorismate: step 5/5. Its function is as follows. The alpha subunit is responsible for the aldol cleavage of indoleglycerol phosphate to indole and glyceraldehyde 3-phosphate. This Escherichia coli O127:H6 (strain E2348/69 / EPEC) protein is Tryptophan synthase alpha chain.